The chain runs to 387 residues: Alkanesulfonate monooxygenase (387 aa).

The protein belongs to the SsuD family.

It carries out the reaction an alkanesulfonate + FMNH2 + O2 = an aldehyde + FMN + sulfite + H2O + 2 H(+). In terms of biological role, catalyzes the desulfonation of aliphatic sulfonates. This Cupriavidus necator (strain ATCC 17699 / DSM 428 / KCTC 22496 / NCIMB 10442 / H16 / Stanier 337) (Ralstonia eutropha) protein is Alkanesulfonate monooxygenase.